Consider the following 130-residue polypeptide: Small ribosomal subunit protein uS9 (130 aa).

The protein belongs to the universal ribosomal protein uS9 family.

This Nitrosospira multiformis (strain ATCC 25196 / NCIMB 11849 / C 71) protein is Small ribosomal subunit protein uS9.